The sequence spans 413 residues: 4-hydroxy-3-methylbut-2-en-1-yl diphosphate synthase (flavodoxin) (413 aa).

4 residues coordinate [4Fe-4S] cluster: cysteine 298, cysteine 301, cysteine 344, and glutamate 351.

The protein belongs to the IspG family. It depends on [4Fe-4S] cluster as a cofactor.

The catalysed reaction is (2E)-4-hydroxy-3-methylbut-2-enyl diphosphate + oxidized [flavodoxin] + H2O + 2 H(+) = 2-C-methyl-D-erythritol 2,4-cyclic diphosphate + reduced [flavodoxin]. It participates in isoprenoid biosynthesis; isopentenyl diphosphate biosynthesis via DXP pathway; isopentenyl diphosphate from 1-deoxy-D-xylulose 5-phosphate: step 5/6. Its function is as follows. Converts 2C-methyl-D-erythritol 2,4-cyclodiphosphate (ME-2,4cPP) into 1-hydroxy-2-methyl-2-(E)-butenyl 4-diphosphate. This chain is 4-hydroxy-3-methylbut-2-en-1-yl diphosphate synthase (flavodoxin), found in Koribacter versatilis (strain Ellin345).